Consider the following 269-residue polypeptide: Growth-regulating factor 11 (269 aa).

Residues 1–11 (MAAEGEAKKDS) are compositionally biased toward basic and acidic residues. Residues 1–71 (MAAEGEAKKD…GKEDVEEGGV (71 aa)) are disordered. Residues 43–52 (GEAGGGGGGG) are compositionally biased toward gly residues. The segment covering 58–68 (EEEEGKEDVEE) has biased composition (acidic residues). Residues 114–149 (AFTAMQLQELEQQSRVYQYMAARVPVPTHLVFPIWK) enclose the QLQ domain. Residues 180–224 (EPEPGRCRRTDGKKWRCWRNAIANEKYCERHMHRGRKRPVQLVVE) enclose the WRC domain. Short sequence motifs (bipartite nuclear localization signal) lie at residues 185–195 (RCRRTDGKKWR) and 213–217 (RGRKR). The tract at residues 212 to 269 (HRGRKRPVQLVVEDDEPDSTSGSKPASGKATEGGKKTDDKSSSSKKLAVAAPAAVEST) is disordered. Over residues 243 to 253 (EGGKKTDDKSS) the composition is skewed to basic and acidic residues. The segment covering 255–269 (SKKLAVAAPAAVEST) has biased composition (low complexity).

It belongs to the GRF family.

The protein localises to the nucleus. Its function is as follows. Transcription activator that plays a regulatory role in gibberellin-induced stem elongation. The protein is Growth-regulating factor 11 (GRF11) of Oryza sativa subsp. japonica (Rice).